Consider the following 414-residue polypeptide: MAATMVLDPKPSSTPPPTLPNPYTTDSQSTDSEDDLYTRLKTLDRQIEFIDIQEEYVKDELKNLKREQLRSQEEVKRIQSVPLVIGQFMEMIDQNNGIVGSTTGSNYYVRILSTINRELLKPSASVALHRHSNALVDVLPPEADSSISLLSQSEKPDVTYNDIGGCDIQKQEIREAVELPLTHHELYKQIGIDPPRGVLLYGPPGTGKTMLAKAVANHTTAAFIRVVGSEFVQKYLGEGPRMVRDVFRLAKENAPAIIFIDEVDAIATARFDAQTGADREVQRILMELLNQMDGFDQTVNVKVIMATNRADTLDPALLRPGRLDRKIEFPLPDRRQKRLVFQVCTAKMNLSDEVDLEDYVSRPDKISAAEITAICQEAGMHAVRKNRYVILPKDFEKGYRTNVKKPDTDFDFYK.

A disordered region spans residues 1–33; the sequence is MAATMVLDPKPSSTPPPTLPNPYTTDSQSTDSE. The span at 21–30 shows a compositional bias: low complexity; that stretch reads NPYTTDSQST. The stretch at 55–81 forms a coiled coil; sequence EYVKDELKNLKREQLRSQEEVKRIQSV. Residue 202-209 coordinates ATP; it reads GPPGTGKT.

The protein belongs to the AAA ATPase family.

Its subcellular location is the cytoplasm. The protein localises to the nucleus. Functionally, the 26S proteasome is involved in the ATP-dependent degradation of ubiquitinated proteins. The regulatory (or ATPase) complex confers ATP dependency and substrate specificity to the 26S complex. The sequence is that of 26S proteasome regulatory subunit 6B homolog from Helianthus annuus (Common sunflower).